The sequence spans 201 residues: Glycolipid transfer protein (201 aa).

Residues 28-168 are glycolipid transfer protein homology domain; it reads IATTQFLEAC…KDFYAKLGDD (141 aa).

Its function is as follows. Cargo transport protein that plays a key role in transport and secretion of liamocins, glycolipids (also called heavy oils) composed of a single mannitol or arabitol headgroup linked to either three, four or even six 3,5-dihydroxydecanoic ester tail-groups. This is Glycolipid transfer protein from Aureobasidium melanogenum (Aureobasidium pullulans var. melanogenum).